An 885-amino-acid polypeptide reads, in one-letter code: Translation initiation factor IF-2 (885 aa).

The disordered stretch occupies residues 1–295 (MTDNKDDKTI…EKFKRSQMQE (295 aa)). Positions 63 to 77 (PVAAAPAAARPAEQR) are enriched in low complexity. The segment covering 78–94 (PMPPQPSGRPAPQPQPH) has biased composition (pro residues). Basic and acidic residues predominate over residues 130 to 183 (RDAEEAKRRAEEEVRRRREEEERIAREKEEAARRAAEEAARPAVEAEKVEEKVE). A compositionally biased stretch (low complexity) spans 184–201 (AATPAVAETRPLSERPAP). The tr-type G domain occupies 383–550 (ARPPIVTIMG…AILLQSEILD (168 aa)). The tract at residues 392–399 (GHVDHGKT) is G1. Position 392 to 399 (392 to 399 (GHVDHGKT)) interacts with GTP. A G2 region spans residues 417 to 421 (GITQH). A G3 region spans residues 438–441 (DTPG). GTP contacts are provided by residues 438 to 442 (DTPGH) and 492 to 495 (NKID). A G4 region spans residues 492–495 (NKID). Positions 528-530 (SAK) are G5.

The protein belongs to the TRAFAC class translation factor GTPase superfamily. Classic translation factor GTPase family. IF-2 subfamily.

It localises to the cytoplasm. Functionally, one of the essential components for the initiation of protein synthesis. Protects formylmethionyl-tRNA from spontaneous hydrolysis and promotes its binding to the 30S ribosomal subunits. Also involved in the hydrolysis of GTP during the formation of the 70S ribosomal complex. The protein is Translation initiation factor IF-2 of Sinorhizobium medicae (strain WSM419) (Ensifer medicae).